A 414-amino-acid polypeptide reads, in one-letter code: Tryptophan synthase beta chain (414 aa).

The interval 1–26 (MVSTFSRKNQNYKKDDLNQPSKDGRF) is disordered. Over residues 12 to 26 (YKKDDLNQPSKDGRF) the composition is skewed to basic and acidic residues. At Lys109 the chain carries N6-(pyridoxal phosphate)lysine.

The protein belongs to the TrpB family. In terms of assembly, tetramer of two alpha and two beta chains. It depends on pyridoxal 5'-phosphate as a cofactor.

It carries out the reaction (1S,2R)-1-C-(indol-3-yl)glycerol 3-phosphate + L-serine = D-glyceraldehyde 3-phosphate + L-tryptophan + H2O. It participates in amino-acid biosynthesis; L-tryptophan biosynthesis; L-tryptophan from chorismate: step 5/5. Its function is as follows. The beta subunit is responsible for the synthesis of L-tryptophan from indole and L-serine. The polypeptide is Tryptophan synthase beta chain (Prochlorococcus marinus (strain MIT 9215)).